The following is a 469-amino-acid chain: Glutamate--tRNA ligase 1 (469 aa).

Residues Pro-10–Gly-20 carry the 'HIGH' region motif. The 'KMSKS' region motif lies at Lys-252–Arg-256. An ATP-binding site is contributed by Lys-255.

This sequence belongs to the class-I aminoacyl-tRNA synthetase family. Glutamate--tRNA ligase type 1 subfamily. In terms of assembly, monomer.

It is found in the cytoplasm. The enzyme catalyses tRNA(Glu) + L-glutamate + ATP = L-glutamyl-tRNA(Glu) + AMP + diphosphate. In terms of biological role, catalyzes the attachment of glutamate to tRNA(Glu) in a two-step reaction: glutamate is first activated by ATP to form Glu-AMP and then transferred to the acceptor end of tRNA(Glu). This chain is Glutamate--tRNA ligase 1, found in Fervidobacterium nodosum (strain ATCC 35602 / DSM 5306 / Rt17-B1).